A 433-amino-acid polypeptide reads, in one-letter code: Enolase (433 aa).

(2R)-2-phosphoglycerate is bound at residue Gln167. The active-site Proton donor is Glu209. Asp246 contacts Mg(2+). Residues 252-260 carry the Plasminogen-binding motif motif; sequence FYDAEKKEY. Mg(2+)-binding residues include Glu291 and Asp318. Positions 343, 372, 373, and 394 each coordinate (2R)-2-phosphoglycerate. The Proton acceptor role is filled by Lys343.

The protein belongs to the enolase family. As to quaternary structure, component of the RNA degradosome, a multiprotein complex involved in RNA processing and mRNA degradation. Mg(2+) is required as a cofactor.

It localises to the cell inner membrane. It is found in the cell outer membrane. The protein localises to the cytoplasm. Its subcellular location is the secreted. The protein resides in the cell surface. The catalysed reaction is (2R)-2-phosphoglycerate = phosphoenolpyruvate + H2O. The protein operates within carbohydrate degradation; glycolysis; pyruvate from D-glyceraldehyde 3-phosphate: step 4/5. Functionally, catalyzes the reversible conversion of 2-phosphoglycerate (2-PG) into phosphoenolpyruvate (PEP). It is essential for the degradation of carbohydrates via glycolysis. Its function is as follows. 'Moonlights' as a plasminogen receptor and plasmin activator. Binds host (human) plasminogen in vitro. Binds human plasmin and plasminogen on the cell surface; enhances the activity of host tissue-specific plasminogen activator (tPA). Plasmin bound to bacteria is partially protected from its physiological inhibitor alpha-2AP (SERPINF2). The protein is Enolase of Aeromonas hydrophila.